We begin with the raw amino-acid sequence, 549 residues long: Cytoplasmic trehalase (549 aa).

Residues Arg-168, Trp-175 to Asp-176, Asn-212, Arg-221 to Gln-223, Arg-292 to Glu-294, and Gly-324 contribute to the substrate site. Catalysis depends on proton donor/acceptor residues Asp-326 and Glu-509. Residue Glu-525 coordinates substrate.

Belongs to the glycosyl hydrolase 37 family. In terms of assembly, monomer.

Its subcellular location is the cytoplasm. It carries out the reaction alpha,alpha-trehalose + H2O = alpha-D-glucose + beta-D-glucose. Its pathway is glycan degradation; trehalose degradation; D-glucose from alpha,alpha-trehalose: step 1/1. In terms of biological role, hydrolyzes trehalose to glucose. Could be involved, in cells returning to low osmolarity conditions, in the utilization of the accumulated cytoplasmic trehalose, which was synthesized in response to high osmolarity. The sequence is that of Cytoplasmic trehalase from Salmonella choleraesuis (strain SC-B67).